Reading from the N-terminus, the 331-residue chain is Ferredoxin--NADP reductase (331 aa).

Residues threonine 20, glutamate 39, glutamine 47, tyrosine 52, valine 92, phenylalanine 126, aspartate 287, and serine 328 each coordinate FAD.

The protein belongs to the ferredoxin--NADP reductase type 2 family. Homodimer. FAD is required as a cofactor.

The catalysed reaction is 2 reduced [2Fe-2S]-[ferredoxin] + NADP(+) + H(+) = 2 oxidized [2Fe-2S]-[ferredoxin] + NADPH. This is Ferredoxin--NADP reductase from Bacillus cereus (strain ZK / E33L).